The following is a 268-amino-acid chain: Zinc finger protein SNAI2 (268 aa).

An SNAG domain region spans residues 1-20 (MPRSFLVKKHFNASKKPNYS). Residues 80 to 117 (SSSLGRVSPPPPSDTSSKDHSGSESPISDEEERLQSKL) form a disordered region. 4 consecutive C2H2-type zinc fingers follow at residues 128–150 (FQCN…KQLH), 159–181 (FSCK…IRTH), 185–207 (CVCK…IRTH), and 213–235 (FSCP…LQTH). The C2H2-type 5; atypical zinc finger occupies 241–264 (YQCKNCSKTFSRMSLLHKHEESGC).

The protein belongs to the snail C2H2-type zinc-finger protein family. In terms of assembly, interacts (via SNAG domain) with LIMD1 (via LIM domains), WTIP (via LIM domains) and AJUBA (via LIM domains). Interacts (via zinc fingers) with KPNA2, KPNB1, and TNPO1. May interact (via zinc fingers) with IPO7. In terms of processing, phosphorylated by GSK3B. Once phosphorylated, it becomes a target for ubiquitination. Ubiquitinated by the SCF(FBXO11) complex; ubiquitination requires previous GSK3B-mediated SNAI2 phosphorylation. Expressed in most adult human tissues, including spleen, thymus, prostate, testis, ovary, small intestine, colon, heart, brain, placenta, lung, liver, skeletal muscle, kidney and pancreas. Not detected in peripheral blood leukocyte. Expressed in the dermis and in all layers of the epidermis, with high levels of expression in the basal layers (at protein level). Expressed in osteoblasts (at protein level). Expressed in mesenchymal stem cells (at protein level). Expressed in breast tumor cells (at protein level).

It is found in the nucleus. It localises to the cytoplasm. Transcriptional repressor that modulates both activator-dependent and basal transcription. Involved in the generation and migration of neural crest cells. Plays a role in mediating RAF1-induced transcriptional repression of the TJ protein, occludin (OCLN) and subsequent oncogenic transformation of epithelial cells. Represses BRCA2 expression by binding to its E2-box-containing silencer and recruiting CTBP1 and HDAC1 in breast cells. In epidermal keratinocytes, binds to the E-box in ITGA3 promoter and represses its transcription. Involved in the regulation of ITGB1 and ITGB4 expression and cell adhesion and proliferation in epidermal keratinocytes. Binds to E-box2 domain of BSG and activates its expression during TGFB1-induced epithelial-mesenchymal transition (EMT) in hepatocytes. Represses E-Cadherin/CDH1 transcription via E-box elements. Involved in osteoblast maturation. Binds to RUNX2 and SOC9 promoters and may act as a positive and negative transcription regulator, respectively, in osteoblasts. Binds to CXCL12 promoter via E-box regions in mesenchymal stem cells and osteoblasts. Plays an essential role in TWIST1-induced EMT and its ability to promote invasion and metastasis. In Homo sapiens (Human), this protein is Zinc finger protein SNAI2 (SNAI2).